The following is a 241-amino-acid chain: Glucosamine-6-phosphate deaminase (241 aa).

The active-site Proton acceptor; for enolization step is Asp67. Residue Asn136 is the For ring-opening step of the active site. Residue His138 is the Proton acceptor; for ring-opening step of the active site. The active-site For ring-opening step is the Glu143.

It belongs to the glucosamine/galactosamine-6-phosphate isomerase family. NagB subfamily.

It catalyses the reaction alpha-D-glucosamine 6-phosphate + H2O = beta-D-fructose 6-phosphate + NH4(+). It participates in amino-sugar metabolism; N-acetylneuraminate degradation; D-fructose 6-phosphate from N-acetylneuraminate: step 5/5. Functionally, catalyzes the reversible isomerization-deamination of glucosamine 6-phosphate (GlcN6P) to form fructose 6-phosphate (Fru6P) and ammonium ion. The polypeptide is Glucosamine-6-phosphate deaminase (Bacillus pumilus (strain SAFR-032)).